Reading from the N-terminus, the 250-residue chain is GPI-anchored hemophore PGA10 (250 aa).

The first 20 residues, 1 to 20 (MMSFSLLSIVSIALAATVSA), serve as a signal peptide directing secretion. Residues 26-137 (NAYTAYPSVA…DALAKAANAA (112 aa)) enclose the CFEM domain. 4 disulfide bridges follow: cysteine 54–cysteine 94, cysteine 58–cysteine 89, cysteine 68–cysteine 75, and cysteine 77–cysteine 110. Aspartate 72 provides a ligand contact to heme. The disordered stretch occupies residues 165-219 (STSHESKVAETSVAQQTASTEKSSAAETSRAKETSKAEESSKAEETSVAQSSSSA). Residues 178–192 (AQQTASTEKSSAAET) show a composition bias toward low complexity. The segment covering 193–209 (SRAKETSKAEESSKAEE) has biased composition (basic and acidic residues). Low complexity predominate over residues 210-219 (TSVAQSSSSA). The GPI-anchor amidated asparagine moiety is linked to residue asparagine 230. A propeptide spans 231 to 250 (AGNMPVIAIGGVIAAFAALI) (removed in mature form).

Belongs to the RBT5 family. The GPI-anchor is attached to the protein in the endoplasmic reticulum and serves to target the protein to the cell surface. There, the glucosamine-inositol phospholipid moiety is cleaved off and the GPI-modified mannoprotein is covalently attached via its lipidless GPI glycan remnant to the 1,6-beta-glucan of the outer cell wall layer. In terms of processing, mannosylated.

Its subcellular location is the secreted. The protein resides in the cell wall. The protein localises to the cell membrane. In terms of biological role, heme-binding protein involved in heme-iron utilization. The ability to acquire iron from host tissues is a major virulence factor of pathogenic microorganisms. Involved in biofilm formation. In Candida albicans (strain SC5314 / ATCC MYA-2876) (Yeast), this protein is GPI-anchored hemophore PGA10.